The primary structure comprises 873 residues: Outer membrane usher protein FimC (873 aa).

The first 15 residues, 1–15 (MKQIPLILAMSLAFA), serve as a signal peptide directing secretion. Cysteine 815 and cysteine 838 are joined by a disulfide.

It belongs to the fimbrial export usher family.

The protein resides in the cell outer membrane. Probable porin-like protein necessary for the assembly of a pilin-type protein. In Bordetella pertussis (strain Tohama I / ATCC BAA-589 / NCTC 13251), this protein is Outer membrane usher protein FimC (fimC).